A 349-amino-acid polypeptide reads, in one-letter code: Aldehyde reductase YahK (349 aa).

Residues Cys-40, His-62, Cys-93, Cys-96, Cys-99, Cys-107, and Cys-158 each contribute to the Zn(2+) site.

This sequence belongs to the zinc-containing alcohol dehydrogenase family. Zn(2+) serves as cofactor.

The enzyme catalyses a primary alcohol + NADP(+) = an aldehyde + NADPH + H(+). Functionally, catalyzes the reduction of a wide range of aldehydes into their corresponding alcohols. Has a strong preference for NADPH over NADH as the electron donor. Cannot use a ketone as substrate. Is a major source of NADPH-dependent aldehyde reductase activity in E.coli. The in vivo functions of YahK has yet to be determined. This is Aldehyde reductase YahK (yahK) from Escherichia coli (strain K12).